We begin with the raw amino-acid sequence, 101 residues long: Small ribosomal subunit protein uS14 (101 aa).

The protein belongs to the universal ribosomal protein uS14 family. In terms of assembly, part of the 30S ribosomal subunit. Contacts proteins S3 and S10.

Functionally, binds 16S rRNA, required for the assembly of 30S particles and may also be responsible for determining the conformation of the 16S rRNA at the A site. The chain is Small ribosomal subunit protein uS14 from Rhizobium etli (strain CIAT 652).